Consider the following 278-residue polypeptide: HTH-type transcriptional activator RhaS (278 aa).

The 99-residue stretch at 174-272 (NLLLAWLEDH…NWSPRDIRQG (99 aa)) folds into the HTH araC/xylS-type domain. DNA-binding regions (H-T-H motif) lie at residues 191 to 212 (DAVA…KQKT) and 239 to 262 (VTDI…RREF).

As to quaternary structure, binds DNA as a dimer.

It localises to the cytoplasm. Its function is as follows. Activates expression of the rhaBAD and rhaT operons. The sequence is that of HTH-type transcriptional activator RhaS from Escherichia coli O45:K1 (strain S88 / ExPEC).